The chain runs to 295 residues: MPWIQIKLNATNENAEQIGDMLMEETGALSVTFLDAQDTPVFEPLPGETRLWGDTDILALYDAEADTNFIIDQIKASNMLAENFAYKVEQLEDKDWEREWMENFHPMKFGERLWICPSWREVPEPDAVNVMLDPGLAFGTGTHPTTALCLEWLESMDLSGKTVIDFGCGSGILAIAAIKLGAEKVIGIDIDPQALLASKDNAERNGVADKLEVYLPQNQPEGLIADVVVANILAGPLRELAPIIKGLVKPNGALAMSGVLDTQAEDVASYYRDELHIDPIVEQSEWCRISGRKQG.

Positions 146, 167, 189, and 231 each coordinate S-adenosyl-L-methionine.

The protein belongs to the methyltransferase superfamily. PrmA family.

The protein localises to the cytoplasm. The enzyme catalyses L-lysyl-[protein] + 3 S-adenosyl-L-methionine = N(6),N(6),N(6)-trimethyl-L-lysyl-[protein] + 3 S-adenosyl-L-homocysteine + 3 H(+). Functionally, methylates ribosomal protein L11. The polypeptide is Ribosomal protein L11 methyltransferase (Vibrio parahaemolyticus serotype O3:K6 (strain RIMD 2210633)).